The chain runs to 506 residues: GMP synthase [glutamine-hydrolyzing] (506 aa).

The 189-residue stretch at 2–190 folds into the Glutamine amidotransferase type-1 domain; it reads SIVILDFGSQ…FLDICGVTRD (189 aa). Cys-79 serves as the catalytic Nucleophile. Residues His-165 and Glu-167 contribute to the active site. Positions 191–381 constitute a GMPS ATP-PPase domain; sequence WNAEHIVDEL…LGLPDHIRMR (191 aa). 219–225 contributes to the ATP binding site; sequence SGGVDSS.

As to quaternary structure, homodimer.

It carries out the reaction XMP + L-glutamine + ATP + H2O = GMP + L-glutamate + AMP + diphosphate + 2 H(+). The protein operates within purine metabolism; GMP biosynthesis; GMP from XMP (L-Gln route): step 1/1. Catalyzes the synthesis of GMP from XMP. The polypeptide is GMP synthase [glutamine-hydrolyzing] (guaA) (Deinococcus radiodurans (strain ATCC 13939 / DSM 20539 / JCM 16871 / CCUG 27074 / LMG 4051 / NBRC 15346 / NCIMB 9279 / VKM B-1422 / R1)).